Consider the following 218-residue polypeptide: Sulfite reductase, assimilatory-type (218 aa).

Positions 91, 97, 131, and 135 each coordinate [4Fe-4S] cluster. C135 contacts siroheme.

Its function is as follows. This enzyme catalyzes the 6-electron reduction of sulfite to sulfide. This is one of several activities required for the biosynthesis of L-cysteine from sulfate. The polypeptide is Sulfite reductase, assimilatory-type (Nitratidesulfovibrio vulgaris (strain ATCC 29579 / DSM 644 / CCUG 34227 / NCIMB 8303 / VKM B-1760 / Hildenborough) (Desulfovibrio vulgaris)).